A 245-amino-acid polypeptide reads, in one-letter code: 1-(5-phosphoribosyl)-5-[(5-phosphoribosylamino)methylideneamino] imidazole-4-carboxamide isomerase (245 aa).

The Proton acceptor role is filled by D7. The active-site Proton donor is D129.

It belongs to the HisA/HisF family.

The protein resides in the cytoplasm. It carries out the reaction 1-(5-phospho-beta-D-ribosyl)-5-[(5-phospho-beta-D-ribosylamino)methylideneamino]imidazole-4-carboxamide = 5-[(5-phospho-1-deoxy-D-ribulos-1-ylimino)methylamino]-1-(5-phospho-beta-D-ribosyl)imidazole-4-carboxamide. It functions in the pathway amino-acid biosynthesis; L-histidine biosynthesis; L-histidine from 5-phospho-alpha-D-ribose 1-diphosphate: step 4/9. The chain is 1-(5-phosphoribosyl)-5-[(5-phosphoribosylamino)methylideneamino] imidazole-4-carboxamide isomerase from Shewanella frigidimarina (strain NCIMB 400).